The primary structure comprises 172 residues: uncharacterized protein (172 aa).

In terms of domain architecture, PfpI endopeptidase spans 3-171 (KKVAIILSNE…FNREIVKQLQ (169 aa)).

Belongs to the peptidase C56 family.

This is an uncharacterized protein from Staphylococcus haemolyticus (strain JCSC1435).